Here is a 111-residue protein sequence, read N- to C-terminus: UPF0375 protein ule-4 (111 aa).

Positions 1 to 18 are cleaved as a signal peptide; sequence MNSRLVLLLAVSVALVSA. N-linked (GlcNAc...) asparagine glycosylation is found at Asn-23 and Asn-58.

The protein belongs to the UPF0375 family.

It is found in the secreted. The protein is UPF0375 protein ule-4 of Caenorhabditis elegans.